A 355-amino-acid polypeptide reads, in one-letter code: CX3C chemokine receptor 1 (355 aa).

The Extracellular segment spans residues 1–31; the sequence is MDQFPESVTENFEYDDLAEACYIGDIVVFGT. The chain crosses the membrane as a helical span at residues 32–59; that stretch reads VFLSIFYSVIFAIGLVGNLLVVFALTNS. Over 60-69 the chain is Cytoplasmic; that stretch reads KKPKSVTDIY. The chain crosses the membrane as a helical span at residues 70–90; sequence LLNLALSDLLFVATLPFWTHY. Topologically, residues 91–103 are extracellular; the sequence is LINEKGLHNAMCK. An intrachain disulfide couples C102 to C175. A helical transmembrane segment spans residues 104–125; it reads FTTAFFFIGFFGSIFFITVISI. Residues 126 to 142 lie on the Cytoplasmic side of the membrane; sequence DRYLAIVLAANSMNNRT. The helical transmembrane segment at 143–167 threads the bilayer; it reads VQHGVTISLGVWAAAILVAAPQFMF. The Extracellular portion of the chain corresponds to 168–195; the sequence is TKQKENECLGDYPEVLQEIWPVLRNVET. Residues 196–215 form a helical membrane-spanning segment; that stretch reads NFLGFLLPLLIMSYCYFRII. Residues 216 to 231 lie on the Cytoplasmic side of the membrane; sequence QTLFSCKNHKKAKAIK. A helical membrane pass occupies residues 232–256; sequence LILLVVIVFFLFWTPYNVMIFLETL. Over 257–273 the chain is Extracellular; the sequence is KLYDFFPSCDMRKDLRL. A helical membrane pass occupies residues 274–297; sequence ALSVTETVAFSHCCLNPLIYAFAG. The Cytoplasmic portion of the chain corresponds to 298–355; sequence EKFRRYLYHLYGKCLAVLCGRSVHVDFSSSESQRSRHGSVLSSNFTYHTSDGDALLLL. At T346 the chain carries Phosphothreonine.

This sequence belongs to the G-protein coupled receptor 1 family. Found in a ternary complex with CX3CL1 and ITGAV:ITGB3 or ITGA4:ITGB1. In terms of assembly, (Microbial infection) Interacts with human respiratory syncytial virus (HRSV) protein G; this interaction modulates host immune response. As to quaternary structure, (Microbial infection) Interacts with HIV-1 envelope polyprotein gp160. This protein is not N-glycosylated which is unusual for G-protein-coupled receptors. In terms of tissue distribution, expressed in lymphoid and neural tissues. Expressed in lymphocyte subsets, such as natural killer (NK) cells, gamma-delta T-cells and terminally differentiated CD8(+) T-cells. Expressed in smooth muscle cells in atherosclerotic plaques.

It is found in the cell membrane. Its function is as follows. Receptor for the C-X3-C chemokine fractalkine (CX3CL1) present on many early leukocyte cells; CX3CR1-CX3CL1 signaling exerts distinct functions in different tissue compartments, such as immune response, inflammation, cell adhesion and chemotaxis. CX3CR1-CX3CL1 signaling mediates cell migratory functions. Responsible for the recruitment of natural killer (NK) cells to inflamed tissues. Acts as a regulator of inflammation process leading to atherogenesis by mediating macrophage and monocyte recruitment to inflamed atherosclerotic plaques, promoting cell survival. Involved in airway inflammation by promoting interleukin 2-producing T helper (Th2) cell survival in inflamed lung. Involved in the migration of circulating monocytes to non-inflamed tissues, where they differentiate into macrophages and dendritic cells. Acts as a negative regulator of angiogenesis, probably by promoting macrophage chemotaxis. Plays a key role in brain microglia by regulating inflammatory response in the central nervous system (CNS) and regulating synapse maturation. Required to restrain the microglial inflammatory response in the CNS and the resulting parenchymal damage in response to pathological stimuli. Involved in brain development by participating in synaptic pruning, a natural process during which brain microglia eliminates extra synapses during postnatal development. Synaptic pruning by microglia is required to promote the maturation of circuit connectivity during brain development. Acts as an important regulator of the gut microbiota by controlling immunity to intestinal bacteria and fungi. Expressed in lamina propria dendritic cells in the small intestine, which form transepithelial dendrites capable of taking up bacteria in order to provide defense against pathogenic bacteria. Required to initiate innate and adaptive immune responses against dissemination of commensal fungi (mycobiota) component of the gut: expressed in mononuclear phagocytes (MNPs) and acts by promoting induction of antifungal IgG antibodies response to confer protection against disseminated C.albicans or C.auris infection. Also acts as a receptor for C-C motif chemokine CCL26, inducing cell chemotaxis. (Microbial infection) Acts as a coreceptor with CD4 for HIV-1 virus envelope protein. In terms of biological role, (Microbial infection) Acts as a coreceptor with CD4 for HIV-1 virus envelope protein. May have more potent HIV-1 coreceptothr activity than isoform 1. Functionally, (Microbial infection) Acts as a coreceptor with CD4 for HIV-1 virus envelope protein. May have more potent HIV-1 coreceptor activity than isoform 1. The polypeptide is CX3C chemokine receptor 1 (Homo sapiens (Human)).